A 734-amino-acid chain; its full sequence is Cytoplasmic polyadenylation element-binding protein 3 (734 aa).

3 disordered regions span residues 1-31 (MDRNDDSAPVQAAAEPAEHPGDEKSGKRNVP), 98-185 (GSKK…AARN), and 220-283 (RGSL…LPPR). Over residues 16 to 26 (PAEHPGDEKSG) the composition is skewed to basic and acidic residues. Composition is skewed to low complexity over residues 121–140 (SRRTTPTASASTAKTTSPSR) and 232–242 (KSFSSTTTSSS). The span at 243 to 256 (PEKEREKEKEKIEQ) shows a compositional bias: basic and acidic residues. The segment covering 259–275 (YGTTQRQSVNSQQSSAS) has biased composition (polar residues). Residues 294–316 (IFVGGVPWDITEAALKDSFGEFG) form the RRM domain. 2 disordered regions span residues 564–593 (KAYQGHASRHSHLSSNSPSKARDGQNSNNS) and 630–657 (TVYDGPLTPPSSETMSKRGSREFSSNSN). The span at 576-593 (LSSNSPSKARDGQNSNNS) shows a compositional bias: low complexity.

Cytoplasmic polyadenylation element binding protein that binds to and regulates the translation of specific mRNAs. This chain is Cytoplasmic polyadenylation element-binding protein 3 (cpb-3), found in Caenorhabditis japonica.